We begin with the raw amino-acid sequence, 246 residues long: tRNA pseudouridine synthase A (246 aa).

The Nucleophile role is filled by Asp-53. Position 111 (Tyr-111) interacts with substrate.

Belongs to the tRNA pseudouridine synthase TruA family. Homodimer.

The catalysed reaction is uridine(38/39/40) in tRNA = pseudouridine(38/39/40) in tRNA. Functionally, formation of pseudouridine at positions 38, 39 and 40 in the anticodon stem and loop of transfer RNAs. This Lysinibacillus sphaericus (strain C3-41) protein is tRNA pseudouridine synthase A.